Here is a 355-residue protein sequence, read N- to C-terminus: Peptide chain release factor 1 (355 aa).

Gln-230 is modified (N5-methylglutamine).

The protein belongs to the prokaryotic/mitochondrial release factor family. Methylated by PrmC. Methylation increases the termination efficiency of RF1.

It localises to the cytoplasm. Its function is as follows. Peptide chain release factor 1 directs the termination of translation in response to the peptide chain termination codons UAG and UAA. This chain is Peptide chain release factor 1, found in Geobacter sulfurreducens (strain ATCC 51573 / DSM 12127 / PCA).